The primary structure comprises 366 residues: Ferrochelatase (366 aa).

Fe cation contacts are provided by His209 and Glu290.

The protein belongs to the ferrochelatase family.

It is found in the cytoplasm. It carries out the reaction heme b + 2 H(+) = protoporphyrin IX + Fe(2+). The protein operates within porphyrin-containing compound metabolism; protoheme biosynthesis; protoheme from protoporphyrin-IX: step 1/1. Its function is as follows. Catalyzes the ferrous insertion into protoporphyrin IX. The sequence is that of Ferrochelatase from Teredinibacter turnerae (strain ATCC 39867 / T7901).